The primary structure comprises 363 residues: tRNA/tmRNA (uracil-C(5))-methyltransferase (363 aa).

S-adenosyl-L-methionine contacts are provided by Q187, Y215, N220, E236, and D296. Catalysis depends on C321, which acts as the Nucleophile. The active-site Proton acceptor is E355.

Belongs to the class I-like SAM-binding methyltransferase superfamily. RNA M5U methyltransferase family. TrmA subfamily.

The enzyme catalyses uridine(54) in tRNA + S-adenosyl-L-methionine = 5-methyluridine(54) in tRNA + S-adenosyl-L-homocysteine + H(+). The catalysed reaction is uridine(341) in tmRNA + S-adenosyl-L-methionine = 5-methyluridine(341) in tmRNA + S-adenosyl-L-homocysteine + H(+). Its function is as follows. Dual-specificity methyltransferase that catalyzes the formation of 5-methyluridine at position 54 (m5U54) in all tRNAs, and that of position 341 (m5U341) in tmRNA (transfer-mRNA). This is tRNA/tmRNA (uracil-C(5))-methyltransferase from Haemophilus influenzae (strain PittEE).